A 319-amino-acid polypeptide reads, in one-letter code: 4-hydroxy-3-methylbut-2-enyl diphosphate reductase (319 aa).

[4Fe-4S] cluster is bound at residue Cys17. (2E)-4-hydroxy-3-methylbut-2-enyl diphosphate contacts are provided by His46 and His79. Positions 46 and 79 each coordinate dimethylallyl diphosphate. Isopentenyl diphosphate is bound by residues His46 and His79. Cys101 provides a ligand contact to [4Fe-4S] cluster. Residue His129 participates in (2E)-4-hydroxy-3-methylbut-2-enyl diphosphate binding. Residue His129 participates in dimethylallyl diphosphate binding. His129 is a binding site for isopentenyl diphosphate. The active-site Proton donor is Glu131. (2E)-4-hydroxy-3-methylbut-2-enyl diphosphate is bound at residue Thr170. Position 200 (Cys200) interacts with [4Fe-4S] cluster. The (2E)-4-hydroxy-3-methylbut-2-enyl diphosphate site is built by Ser228, Ser229, Asn230, and Ser273. Residues Ser228, Ser229, Asn230, and Ser273 each coordinate dimethylallyl diphosphate. Isopentenyl diphosphate-binding residues include Ser228, Ser229, Asn230, and Ser273.

The protein belongs to the IspH family. [4Fe-4S] cluster serves as cofactor.

The enzyme catalyses isopentenyl diphosphate + 2 oxidized [2Fe-2S]-[ferredoxin] + H2O = (2E)-4-hydroxy-3-methylbut-2-enyl diphosphate + 2 reduced [2Fe-2S]-[ferredoxin] + 2 H(+). The catalysed reaction is dimethylallyl diphosphate + 2 oxidized [2Fe-2S]-[ferredoxin] + H2O = (2E)-4-hydroxy-3-methylbut-2-enyl diphosphate + 2 reduced [2Fe-2S]-[ferredoxin] + 2 H(+). The protein operates within isoprenoid biosynthesis; dimethylallyl diphosphate biosynthesis; dimethylallyl diphosphate from (2E)-4-hydroxy-3-methylbutenyl diphosphate: step 1/1. It participates in isoprenoid biosynthesis; isopentenyl diphosphate biosynthesis via DXP pathway; isopentenyl diphosphate from 1-deoxy-D-xylulose 5-phosphate: step 6/6. In terms of biological role, catalyzes the conversion of 1-hydroxy-2-methyl-2-(E)-butenyl 4-diphosphate (HMBPP) into a mixture of isopentenyl diphosphate (IPP) and dimethylallyl diphosphate (DMAPP). Acts in the terminal step of the DOXP/MEP pathway for isoprenoid precursor biosynthesis. In Cereibacter sphaeroides (strain ATCC 17025 / ATH 2.4.3) (Rhodobacter sphaeroides), this protein is 4-hydroxy-3-methylbut-2-enyl diphosphate reductase.